The following is a 290-amino-acid chain: Prepilin leader peptidase/N-methyltransferase (290 aa).

The helical transmembrane segment at 14–34 (LYFSLVFLFSLMIGSFLNVVI) threads the bilayer. Zn(2+) contacts are provided by C74, C77, C99, and C102. The next 6 membrane-spanning stretches (helical) occupy residues 106 to 126 (ISAR…AVAM), 130 to 150 (PGWG…LTFI), 161 to 181 (LTLP…FVSL), 185 to 205 (VIGA…FKLL), 232 to 252 (PIVL…LILL), and 261 to 281 (IPFG…GDSI).

This sequence belongs to the peptidase A24 family. It depends on Zn(2+) as a cofactor.

The protein localises to the cell inner membrane. It carries out the reaction Typically cleaves a -Gly-|-Phe- bond to release an N-terminal, basic peptide of 5-8 residues from type IV prepilin, and then N-methylates the new N-terminal amino group, the methyl donor being S-adenosyl-L-methionine.. In terms of biological role, plays an essential role in type IV pili and type II pseudopili formation by proteolytically removing the leader sequence from substrate proteins and subsequently monomethylating the alpha-amino group of the newly exposed N-terminal phenylalanine. In Aeromonas hydrophila, this protein is Prepilin leader peptidase/N-methyltransferase (tapD).